The chain runs to 488 residues: Probable G-protein coupled receptor Mth-like 12 (488 aa).

A signal peptide spans 1-17 (MFLWLKCFCTLIIVTIA). The Extracellular portion of the chain corresponds to 18–215 (KNSSAKIPHC…NRRCYRNVMP (198 aa)). Asparagine 19, asparagine 34, and asparagine 55 each carry an N-linked (GlcNAc...) asparagine glycan. Cystine bridges form between cysteine 27–cysteine 81, cysteine 83–cysteine 88, cysteine 92–cysteine 189, cysteine 93–cysteine 104, and cysteine 155–cysteine 209. The N-linked (GlcNAc...) asparagine glycan is linked to asparagine 141. A helical transmembrane segment spans residues 216–236 (GIAQLSVISVVGFILTLAVYL). The Cytoplasmic segment spans residues 237–247 (SVEKLRNLLGK). Residues 248–268 (CLICSLFSMFMEYFIWTMDYF) traverse the membrane as a helical segment. Residues 269-283 (RLLQSICSAAGYMKY) lie on the Extracellular side of the membrane. Residues 284–304 (FFSMSSYLWFSVVSFHLWELF) form a helical membrane-spanning segment. The Cytoplasmic segment spans residues 305–315 (TSLNRHEPQYR). A helical membrane pass occupies residues 316 to 336 (FLIYNTFVWCTAAIPTVVIFS). The Extracellular portion of the chain corresponds to 337–373 (MNQMWENDPGKSEWLPLVGYFGCSVKDWNSSSWFYSH). Asparagine 365 carries an N-linked (GlcNAc...) asparagine glycan. The chain crosses the membrane as a helical span at residues 374-394 (IPIVILNSFNVIMFVLTAIYI). At 395 to 416 (WKVKKGVKSFAQHDERNTTCLE) the chain is on the cytoplasmic side. A helical membrane pass occupies residues 417–437 (FNVQTYIQFVRLFLIMGASWL). The Extracellular portion of the chain corresponds to 438–454 (LDQLTRLAEDSHLLLDT). A helical membrane pass occupies residues 455–475 (IVLNLTVYLNAAFGILIFVLL). Over 476–488 (ILKGSTFKMIMER) the chain is Cytoplasmic.

Belongs to the G-protein coupled receptor 2 family. Mth subfamily.

Its subcellular location is the cell membrane. The protein is Probable G-protein coupled receptor Mth-like 12 (mthl12) of Drosophila melanogaster (Fruit fly).